The sequence spans 449 residues: Exodeoxyribonuclease 7 large subunit (449 aa).

This sequence belongs to the XseA family. Heterooligomer composed of large and small subunits.

The protein resides in the cytoplasm. The enzyme catalyses Exonucleolytic cleavage in either 5'- to 3'- or 3'- to 5'-direction to yield nucleoside 5'-phosphates.. Its function is as follows. Bidirectionally degrades single-stranded DNA into large acid-insoluble oligonucleotides, which are then degraded further into small acid-soluble oligonucleotides. The protein is Exodeoxyribonuclease 7 large subunit of Salmonella typhimurium (strain LT2 / SGSC1412 / ATCC 700720).